We begin with the raw amino-acid sequence, 175 residues long: Transcription factor HES-3 (175 aa).

The bHLH domain occupies 1-49 (MEKKRRARINLSLEQLRSLLERHYSHQIRKRKLEKADILELSVKYVRSL). Positions 65–98 (YPSGFRGGLPGSSQRLRPGEDDSGLRCPLLLQRR) constitute an Orange domain. A compositionally biased stretch (low complexity) spans 124–145 (PGPPAGGSQSPQSPFPPLGGLL). The tract at residues 124-175 (PGPPAGGSQSPQSPFPPLGGLLESSTGILAPPPASNCQAENPRPGFRVWRPW) is disordered. Residues 172-175 (WRPW) carry the WRPW motif motif.

In terms of assembly, transcription repression requires formation of a complex with a corepressor protein of the Groucho/TLE family. In terms of tissue distribution, expressed exclusively in Purkinje cells.

The protein resides in the nucleus. Functionally, transcriptional repressor of genes that require a bHLH protein for their transcription. This is Transcription factor HES-3 (Hes3) from Rattus norvegicus (Rat).